The primary structure comprises 845 residues: Protein translocase subunit SecA (845 aa).

ATP is bound by residues Gln85, Gly103–Thr107, and Asp492. Positions Arg787–Ala845 are disordered. Zn(2+) is bound by residues Cys829, Cys831, Cys840, and His841. Basic residues predominate over residues Lys835–Ala845.

This sequence belongs to the SecA family. Monomer and homodimer. Part of the essential Sec protein translocation apparatus which comprises SecA, SecYEG and auxiliary proteins SecDF. Other proteins may also be involved. It depends on Zn(2+) as a cofactor.

The protein resides in the cell membrane. The protein localises to the cytoplasm. It catalyses the reaction ATP + H2O + cellular proteinSide 1 = ADP + phosphate + cellular proteinSide 2.. In terms of biological role, part of the Sec protein translocase complex. Interacts with the SecYEG preprotein conducting channel. Has a central role in coupling the hydrolysis of ATP to the transfer of proteins into and across the cell membrane, serving as an ATP-driven molecular motor driving the stepwise translocation of polypeptide chains across the membrane. In Enterococcus faecalis (strain ATCC 700802 / V583), this protein is Protein translocase subunit SecA.